The following is a 413-amino-acid chain: Hemolin (413 aa).

The signal sequence occupies residues 1–18 (MASKSLVVLSACIIIGSA). 4 Ig-like C2-type domains span residues 25–112 (PVLK…RVIS), 122–211 (PAKT…GEVR), 233–322 (PQYL…LKVT), and 327–413 (PKYV…VQVN). Cystine bridges form between Cys46-Cys97, Cys140-Cys199, Cys252-Cys305, and Cys349-Cys395. Residue Asn283 is glycosylated (N-linked (GlcNAc...) asparagine).

Belongs to the hemolin family. As to expression, expressed in larval bristles.

The protein resides in the secreted. With respect to regulation, increased activity in presence of phospholipids (low concentrations) and calcium ions. Inhibited by PMSF. Not affected by EDTA and E-64. Bristle toxin involved in caterpillar defense by participating in hemorrhagic syndrome characterized by a consumptive coagulopathy. Exhibits procoagulant activity through selective factor X proteolytic activation. Activates factor X in a dose- and time-dependent manner but does not activate gamma-carboxyglutamic acid domainless factor X. Its activity does not depend on calcium ions. Also functions as a growth stimulator and an inhibitor of cellular death for endothelial cells. In vitro, increases proliferation of human umbilical vein endothelial cells (HUVEC) and inhibits the apoptosis induced by starvation. Also increases slightly the complement decay-accelerating factor (CD55), which protects cells from complement-mediated lysis. On the other hand, does not alter the release or expression of von Willebrand factor (VWF), tissue factor (F3), intercellular adhesion molecule-1 (ICAM1), interleukin-8 (CXCL8), and prostacyclin. Does not show fibrinolytic or fibrinogenolytic activities. The protein is Hemolin of Lonomia obliqua (Moth).